A 405-amino-acid polypeptide reads, in one-letter code: Na(+)-translocating NADH-quinone reductase subunit F (405 aa).

A helical transmembrane segment spans residues 3–23 (IILGIVMFTVIVLALALMILF). The 2Fe-2S ferredoxin-type domain occupies 32-124 (GDITIKVNDE…DMDIEVPEEV (93 aa)). Residues Cys-67, Cys-73, Cys-76, and Cys-108 each coordinate [2Fe-2S] cluster. Residues 127–267 (VKKWECTVIS…SGPFGEFFAK (141 aa)) form the FAD-binding FR-type domain.

It belongs to the NqrF family. Composed of six subunits; NqrA, NqrB, NqrC, NqrD, NqrE and NqrF. The cofactor is [2Fe-2S] cluster. FAD serves as cofactor.

It is found in the cell inner membrane. It carries out the reaction a ubiquinone + n Na(+)(in) + NADH + H(+) = a ubiquinol + n Na(+)(out) + NAD(+). Its function is as follows. NQR complex catalyzes the reduction of ubiquinone-1 to ubiquinol by two successive reactions, coupled with the transport of Na(+) ions from the cytoplasm to the periplasm. The first step is catalyzed by NqrF, which accepts electrons from NADH and reduces ubiquinone-1 to ubisemiquinone by a one-electron transfer pathway. This chain is Na(+)-translocating NADH-quinone reductase subunit F, found in Neisseria gonorrhoeae (strain ATCC 700825 / FA 1090).